Reading from the N-terminus, the 249-residue chain is tRNA uridine(34) hydroxylase (249 aa).

The region spanning 124–218 (TKQDVIVIDT…YLEDTQNKNN (95 aa)) is the Rhodanese domain. Cysteine 178 functions as the Cysteine persulfide intermediate in the catalytic mechanism.

This sequence belongs to the TrhO family.

The catalysed reaction is uridine(34) in tRNA + AH2 + O2 = 5-hydroxyuridine(34) in tRNA + A + H2O. In terms of biological role, catalyzes oxygen-dependent 5-hydroxyuridine (ho5U) modification at position 34 in tRNAs. This chain is tRNA uridine(34) hydroxylase, found in Rickettsia canadensis (strain McKiel).